Reading from the N-terminus, the 229-residue chain is Chloride conductance regulatory protein ICln (229 aa).

It belongs to the pICln (TC 1.A.47) family. In terms of assembly, homooligomer.

It localises to the cytoplasm. The protein localises to the nucleus. In terms of biological role, may participate in cellular volume control by activation of a swelling-induced chloride conductance pathway. The polypeptide is Chloride conductance regulatory protein ICln (Arabidopsis thaliana (Mouse-ear cress)).